We begin with the raw amino-acid sequence, 143 residues long: Putative aryl-alcohol dehydrogenase AAD15 (143 aa).

The protein belongs to the aldo/keto reductase family. Aldo/keto reductase 2 subfamily.

Putative aryl-alcohol dehydrogenase. In Saccharomyces cerevisiae (strain ATCC 204508 / S288c) (Baker's yeast), this protein is Putative aryl-alcohol dehydrogenase AAD15 (AAD15).